The primary structure comprises 417 residues: Phosphoglycerate kinase 1 (417 aa).

An N-acetylserine modification is found at S2. Residues S2 and S4 each carry the phosphoserine modification. At K6 the chain carries N6-succinyllysine. K11 bears the N6-acetyllysine mark. V23, D24, F25, N26, Q38, and R39 together coordinate (2R)-3-phosphoglycerate. The interval 38–43 (QRIKAA) is mitochondrial targeting region exposed following cis-trans isomerization by PIN1 and recognized by the TOM complex for mitochondrial translocation of the protein. Position 48 is an N6-acetyllysine; alternate (K48). N6-succinyllysine; alternate is present on K48. Positions 62, 63, 65, and 66 each coordinate (2R)-3-phosphoglycerate. Residue K75 is modified to N6-acetyllysine. Y76 carries the post-translational modification Phosphotyrosine. N6-acetyllysine occurs at positions 86 and 91. K97 is subject to N6-acetyllysine; alternate. Residue K97 is modified to N6-(2-hydroxyisobutyryl)lysine; alternate. The (2R)-3-phosphoglycerate site is built by L122 and R123. At K131 the chain carries N6-acetyllysine; alternate. At K131 the chain carries N6-malonyllysine; alternate. K146 carries the post-translational modification N6-acetyllysine. Positions 170 and 171 each coordinate (2R)-3-phosphoglycerate. K191 is modified (N6-succinyllysine). Y196 carries the phosphotyrosine modification. At K199 the chain carries N6-acetyllysine. Residue S203 is modified to Phosphoserine. G214 is a binding site for ADP. G214 is a binding site for CDP. Residues A215 and K216 each coordinate AMP. Residue A215 participates in ATP binding. Residue A215 participates in Mg(2+) binding. At K216 the chain carries N6-(2-hydroxyisobutyryl)lysine. Mg(2+) contacts are provided by A218 and D219. D219 contacts CDP. K220 provides a ligand contact to AMP. K220 serves as a coordination point for ATP. Position 220 is an N6-(2-hydroxyisobutyryl)lysine (K220). G238 provides a ligand contact to ADP. Position 238 (G238) interacts with CDP. Position 239 (G239) interacts with AMP. An ATP-binding site is contributed by G239. An N6-acetyllysine mark is found at K267 and K291. Residue G313 coordinates AMP. G313 is a binding site for ATP. K323 bears the N6-(2-hydroxyisobutyryl)lysine mark. CDP is bound by residues G338, V340, and F343. F343 contacts ADP. E344 is a binding site for AMP. Residue E344 coordinates ATP. The residue at position 354 (S354) is a Phosphoserine. K361 carries the N6-acetyllysine modification. Residues D375 and T376 each contribute to the ATP site. D375 contributes to the Mg(2+) binding site.

It belongs to the phosphoglycerate kinase family. Monomer. Interacts with kinase MAPK1/ERK2; the interaction is direct, occurs under hypoxic conditions, and promotes its interaction with PIN1. Interacts with peptidyl-prolyl cis-trans isomerase PIN1; the interaction is direct, occurs under hypoxic conditions, and targets the protein to the mitochondrion by promoting interactions with the TOM complex. Interacts with mitochondrial circRNA mcPGK1 (via its 2nd stem-loop); the interaction is direct and targets the protein to the mitochondrion by promoting interactions with the TOM complex. Interacts with pyruvate dehydrogenase kinase PDK1; the interaction is direct, occurs under hypoxic conditions and leads to PDK1-mediated inhibition of pyruvate dehydrogenase complex activity. The cofactor is Mg(2+). Phosphorylated at Ser-203 by MAPK1/ERK2 under hypoxic conditions, which promotes its mitochondrial targeting.

Its subcellular location is the cytoplasm. The protein localises to the cytosol. It is found in the mitochondrion matrix. The enzyme catalyses (2R)-3-phosphoglycerate + ATP = (2R)-3-phospho-glyceroyl phosphate + ADP. It catalyses the reaction L-seryl-[protein] + ATP = O-phospho-L-seryl-[protein] + ADP + H(+). It functions in the pathway carbohydrate degradation; glycolysis; pyruvate from D-glyceraldehyde 3-phosphate: step 2/5. Functionally, catalyzes one of the two ATP producing reactions in the glycolytic pathway via the reversible conversion of 1,3-diphosphoglycerate to 3-phosphoglycerate. Both L- and D- forms of purine and pyrimidine nucleotides can be used as substrates, but the activity is much lower on pyrimidines. In addition to its role as a glycolytic enzyme, it seems that PGK-1 acts as a polymerase alpha cofactor protein (primer recognition protein). Acts as a protein kinase when localized to the mitochondrion where it phosphorylates pyruvate dehydrogenase kinase PDK1 to inhibit pyruvate dehydrogenase complex activity and suppress the formation of acetyl-coenzyme A from pyruvate, and consequently inhibit oxidative phosphorylation and promote glycolysis. May play a role in sperm motility. The polypeptide is Phosphoglycerate kinase 1 (Pgk1) (Rattus norvegicus (Rat)).